We begin with the raw amino-acid sequence, 425 residues long: Serine--tRNA ligase (425 aa).

An L-serine-binding site is contributed by 233–235 (TAE). An ATP-binding site is contributed by 264-266 (RRE). Glutamate 287 contacts L-serine. An ATP-binding site is contributed by 351 to 354 (EISS). L-serine is bound at residue serine 385.

This sequence belongs to the class-II aminoacyl-tRNA synthetase family. Type-1 seryl-tRNA synthetase subfamily. As to quaternary structure, homodimer. The tRNA molecule binds across the dimer.

It is found in the cytoplasm. It catalyses the reaction tRNA(Ser) + L-serine + ATP = L-seryl-tRNA(Ser) + AMP + diphosphate + H(+). The catalysed reaction is tRNA(Sec) + L-serine + ATP = L-seryl-tRNA(Sec) + AMP + diphosphate + H(+). It functions in the pathway aminoacyl-tRNA biosynthesis; selenocysteinyl-tRNA(Sec) biosynthesis; L-seryl-tRNA(Sec) from L-serine and tRNA(Sec): step 1/1. Catalyzes the attachment of serine to tRNA(Ser). Is also able to aminoacylate tRNA(Sec) with serine, to form the misacylated tRNA L-seryl-tRNA(Sec), which will be further converted into selenocysteinyl-tRNA(Sec). The polypeptide is Serine--tRNA ligase (Parasynechococcus marenigrum (strain WH8102)).